Reading from the N-terminus, the 761-residue chain is Elongation factor G, mitochondrial (761 aa).

The transit peptide at 1 to 33 (MTSVLRGVLKTHLPRTLTLPRCARNFQTTTFLR) directs the protein to the mitochondrion. In terms of domain architecture, tr-type G spans 66–347 (TRLRNIGISA…SVVDYLPQPN (282 aa)). Residues 75 to 82 (AHIDSGKT), 146 to 150 (DTPGH), and 200 to 203 (NKMD) each bind GTP.

Belongs to the TRAFAC class translation factor GTPase superfamily. Classic translation factor GTPase family. EF-G/EF-2 subfamily.

It localises to the mitochondrion. The protein operates within protein biosynthesis; polypeptide chain elongation. Its function is as follows. Mitochondrial GTPase that catalyzes the GTP-dependent ribosomal translocation step during translation elongation. During this step, the ribosome changes from the pre-translocational (PRE) to the post-translocational (POST) state as the newly formed A-site-bound peptidyl-tRNA and P-site-bound deacylated tRNA move to the P and E sites, respectively. Catalyzes the coordinated movement of the two tRNA molecules, the mRNA and conformational changes in the ribosome. In Candida dubliniensis (strain CD36 / ATCC MYA-646 / CBS 7987 / NCPF 3949 / NRRL Y-17841) (Yeast), this protein is Elongation factor G, mitochondrial.